We begin with the raw amino-acid sequence, 315 residues long: Methionyl-tRNA formyltransferase (315 aa).

(6S)-5,6,7,8-tetrahydrofolate is bound at residue 113–116 (SLLP).

It belongs to the Fmt family.

The enzyme catalyses L-methionyl-tRNA(fMet) + (6R)-10-formyltetrahydrofolate = N-formyl-L-methionyl-tRNA(fMet) + (6S)-5,6,7,8-tetrahydrofolate + H(+). In terms of biological role, attaches a formyl group to the free amino group of methionyl-tRNA(fMet). The formyl group appears to play a dual role in the initiator identity of N-formylmethionyl-tRNA by promoting its recognition by IF2 and preventing the misappropriation of this tRNA by the elongation apparatus. This Erwinia tasmaniensis (strain DSM 17950 / CFBP 7177 / CIP 109463 / NCPPB 4357 / Et1/99) protein is Methionyl-tRNA formyltransferase.